A 991-amino-acid chain; its full sequence is Envelope glycoprotein gp160 (991 aa).

The N-terminal stretch at 1–106 (MTSKESKPSR…CLMWEMRKGN (106 aa)) is a signal peptide. Residues 107–840 (QCQAEEVIAL…WSSWFSWLKY (734 aa)) lie on the Extracellular side of the membrane. N-linked (GlcNAc...) asparagine; by host glycosylation is found at N140, N161, N206, N258, N298, N364, N381, N387, N403, N435, N439, N470, N475, N481, N491, N501, N515, N527, N537, N542, N543, and N568. A fusion peptide region spans residues 665 to 685 (GIGLVIVLAIMAIIAAAGAGL). A coiled-coil region spans residues 697-747 (RTAVQSLANATAAQQEVLEASYAMVQHIAKGIRILEARVARVEALVDRMMV). Residue N705 is glycosylated (N-linked (GlcNAc...) asparagine; by host). An immunosuppression region spans residues 731 to 747 (LEARVARVEALVDRMMV). N-linked (GlcNAc...) asparagine; by host glycosylation is found at N773, N780, N796, and N830. The stretch at 788–823 (EEIEQHEGNLSLLLREAALQVHIAQRDARRIPDAWK) forms a coiled coil. The helical transmembrane segment at 841–861 (VPWIIMGIVGLICFRILMCVI) threads the bilayer. Over 862–991 (SMCLQAYKQV…PTLENDYVEL (130 aa)) the chain is Cytoplasmic. C864 is lipidated: S-palmitoyl cysteine; by host.

In terms of assembly, the mature envelope protein (Env) consists of a trimer of SU-TM heterodimers attached by noncovalent interactions or by a labile interchain disulfide bond. Specific enzymatic cleavages in vivo yield mature proteins. Envelope glycoproteins are synthesized as an inactive precursor that is N-glycosylated and processed likely by host cell furin or by a furin-like protease in the Golgi to yield the mature SU and TM proteins. The cleavage site between SU and TM requires the minimal sequence [KR]-X-[KR]-R. Post-translationally, the transmembrane protein is palmitoylated.

It localises to the virion membrane. The protein resides in the host cell membrane. The surface protein (SU) attaches the virus to the host cell by binding to its receptor. This interaction triggers the refolding of the transmembrane protein (TM) and is thought to activate its fusogenic potential by unmasking its fusion peptide. Fusion occurs at the host cell plasma membrane. Functionally, the transmembrane protein (TM) acts as a class I viral fusion protein. Under the current model, the protein has at least 3 conformational states: pre-fusion native state, pre-hairpin intermediate state, and post-fusion hairpin state. During viral and target cell membrane fusion, the coiled coil regions (heptad repeats) assume a trimer-of-hairpins structure, positioning the fusion peptide in close proximity to the C-terminal region of the ectodomain. The formation of this structure appears to drive apposition and subsequent fusion of viral and target cell membranes. Membranes fusion leads to delivery of the nucleocapsid into the cytoplasm. The chain is Envelope glycoprotein gp160 (env) from Ovis aries (Sheep).